The chain runs to 1082 residues: Integrator complex subunit 3 homolog (1082 aa).

Disordered stretches follow at residues 483 to 563 (PGPP…VSDD), 923 to 945 (YPSNSPNKRKRPSKSAQQNTAPT), and 1005 to 1082 (DETS…SDSD). Low complexity-rich tracts occupy residues 517–528 (PAAKAASTAASA) and 542–555 (TKPATTTTTTTTTT). Residues 936 to 945 (KSAQQNTAPT) are compositionally biased toward polar residues. Composition is skewed to low complexity over residues 1008–1018 (STTVGRRGTSS) and 1033–1056 (EKAAAAAAAAHANNSKKAAEASAK).

It belongs to the Integrator subunit 3 family. Belongs to the multiprotein complex Integrator. The core complex associates with protein phosphatase 2A subunits, to form the Integrator-PP2A (INTAC) complex.

The protein resides in the nucleus. The protein localises to the cytoplasm. Its function is as follows. Component of the integrator complex, a multiprotein complex that terminates RNA polymerase II (Pol II) transcription in the promoter-proximal region of genes. The integrator complex provides a quality checkpoint during transcription elongation by driving premature transcription termination of transcripts that are unfavorably configured for transcriptional elongation: the complex terminates transcription by (1) catalyzing dephosphorylation of the C-terminal domain (CTD) of Pol II subunit Polr2A/Rbp1 and Spt5, and (2) degrading the exiting nascent RNA transcript via endonuclease activity. The integrator complex is also involved in the 3'-end processing of the U7 snRNA, and also the spliceosomal snRNAs U1, U2, U4 and U5. The chain is Integrator complex subunit 3 homolog from Anopheles gambiae (African malaria mosquito).